Reading from the N-terminus, the 278-residue chain is MALKTFKPVTPSLRQLVIVDRSELYKGKPVKALTEGKISSGGRNNLGRVTVRFRGGGHKRTLRNVDFKRREHAGKVGTVERIEYDPNRTAFIALVTYEGGAQSYILAPQRVKAGDKVVSGDSVDIKPGNAMPIGNMPVGTIVHNVELKIGKGGAIARSAGNYAQIVGRDQGYVTLRLNSGEQRLVHGQCYATVGAVSNPDHMNISLGKAGRKRWLGRRPHNRGVAMNPIDHPHGGGEGRTSGGRHPVTPWGFPTKGKKTRSNKRTDTFIVSSRHNRKK.

The interval 223–278 is disordered; that stretch reads GVAMNPIDHPHGGGEGRTSGGRHPVTPWGFPTKGKKTRSNKRTDTFIVSSRHNRKK.

This sequence belongs to the universal ribosomal protein uL2 family. As to quaternary structure, part of the 50S ribosomal subunit. Forms a bridge to the 30S subunit in the 70S ribosome.

One of the primary rRNA binding proteins. Required for association of the 30S and 50S subunits to form the 70S ribosome, for tRNA binding and peptide bond formation. It has been suggested to have peptidyltransferase activity; this is somewhat controversial. Makes several contacts with the 16S rRNA in the 70S ribosome. In Methylobacterium nodulans (strain LMG 21967 / CNCM I-2342 / ORS 2060), this protein is Large ribosomal subunit protein uL2.